The sequence spans 508 residues: Histidine ammonia-lyase (508 aa).

The 5-imidazolinone (Ala-Gly) cross-link spans 143–145 (ASG). A 2,3-didehydroalanine (Ser) modification is found at Ser144.

It belongs to the PAL/histidase family. Contains an active site 4-methylidene-imidazol-5-one (MIO), which is formed autocatalytically by cyclization and dehydration of residues Ala-Ser-Gly.

The protein resides in the cytoplasm. The catalysed reaction is L-histidine = trans-urocanate + NH4(+). It functions in the pathway amino-acid degradation; L-histidine degradation into L-glutamate; N-formimidoyl-L-glutamate from L-histidine: step 1/3. In Klebsiella pneumoniae subsp. pneumoniae (strain ATCC 700721 / MGH 78578), this protein is Histidine ammonia-lyase.